The chain runs to 300 residues: Type 1 fimbrin D-mannose specific adhesin (300 aa).

Residues 1 to 21 (MKRVITLFAVLLMGWSVNAWS) form the signal peptide.

The protein belongs to the fimbrial protein family.

The protein localises to the fimbrium. In terms of biological role, involved in regulation of length and mediation of adhesion of type 1 fimbriae (but not necessary for the production of fimbriae). Adhesin responsible for the binding to D-mannose. It is laterally positioned at intervals in the structure of the type 1 fimbriae. In order to integrate FimH in the fimbriae FimF and FimG are needed. The protein is Type 1 fimbrin D-mannose specific adhesin (fimH) of Escherichia coli (strain K12).